The chain runs to 838 residues: Rab effector MyRIP (838 aa).

A RabBD domain is found at 4-124; that stretch reads KLDLSGLSNN…TQSLEWFYNN (121 aa). An FYVE-type zinc finger spans residues 58–112; that stretch reads KFNEHCCIRCCSPFTFLLNPKRQCLDCHYNICKSCCSYSQSERGYICAACQKSRH. A coiled-coil region spans residues 188 to 237; it reads ADTLTVALRVAEEAIEEAIAKAENYKDSLEKQNEARYLHEHKEELIEELA. Composition is skewed to polar residues over residues 263-290 and 451-484; these read QNQKSELPSPTSTQNPLATQNSHSTSQP and TFTQHPPITSPSSGQYTNTETLNSDSETSPSPST. 4 disordered regions span residues 263–331, 444–501, 525–570, and 681–838; these read QNQK…TEVE, SQHD…ETHL, NFNP…LYSA, and ERDV…EKRN. Basic and acidic residues-rich tracts occupy residues 697–736 and 753–838; these read NKQEDRVSEKDSGKLRPKERRESKRESKLREMEKQSERQT and RQMK…EKRN. Residues 714 to 833 are a coiled coil; that stretch reads KERRESKRES…DLEKKRKSIR (120 aa).

Interacts with prkar2aa.

It is found in the cytoplasm. The protein localises to the perinuclear region. The protein resides in the cytoplasmic vesicle. It localises to the secretory vesicle. In terms of biological role, may link secretory vesicles to actin filaments. May function as a protein kinase A-anchoring protein (AKAP). May act as a scaffolding protein that links PKA to components of the exocytosis machinery, thus facilitating exocytosis. This chain is Rab effector MyRIP (myrip), found in Danio rerio (Zebrafish).